A 352-amino-acid chain; its full sequence is tRNA pseudouridine synthase D (352 aa).

Asp78 serves as the catalytic Nucleophile. One can recognise a TRUD domain in the interval 153 to 299 (GVPNYYGEQR…LDQDRRPLLL (147 aa)).

The protein belongs to the pseudouridine synthase TruD family.

It catalyses the reaction uridine(13) in tRNA = pseudouridine(13) in tRNA. Functionally, responsible for synthesis of pseudouridine from uracil-13 in transfer RNAs. This Aeromonas hydrophila subsp. hydrophila (strain ATCC 7966 / DSM 30187 / BCRC 13018 / CCUG 14551 / JCM 1027 / KCTC 2358 / NCIMB 9240 / NCTC 8049) protein is tRNA pseudouridine synthase D.